The sequence spans 122 residues: Cupin 2 conserved barrel domain-containing protein (122 aa).

Positions 55-119 are cupin 2 conserved barrel; that stretch reads PGGVTTAEDH…DSPVEIVSIW (65 aa). Positions 63, 65, 69, and 103 each coordinate Zn(2+).

The cofactor is Zn(2+).

It catalyses the reaction N(6)-hydroxy-L-lysine + L-glutamate + ATP = 1-L-glutamo-2-N(6-)L-lysinohydrazine + AMP + diphosphate + 2 H(+). Inhibited by 1,10-phenanthroline (OP). Catalyzes hydrazine (N-N) bond formation from an unstable ester intermediate, the product of the ATP-dependent condensation of L-N(6)-OH-lysine and L-glutamine substrates by a methionyl-tRNA synthase-like protein. This is Cupin 2 conserved barrel domain-containing protein from Rhodococcus jostii (strain RHA1).